The primary structure comprises 66 residues: DNA-directed RNA polymerase subunit Rpo10 (66 aa).

Positions 7, 10, 44, and 45 each coordinate Zn(2+).

The protein belongs to the archaeal Rpo10/eukaryotic RPB10 RNA polymerase subunit family. Part of the RNA polymerase complex. The cofactor is Zn(2+).

It is found in the cytoplasm. It carries out the reaction RNA(n) + a ribonucleoside 5'-triphosphate = RNA(n+1) + diphosphate. Functionally, DNA-dependent RNA polymerase (RNAP) catalyzes the transcription of DNA into RNA using the four ribonucleoside triphosphates as substrates. This chain is DNA-directed RNA polymerase subunit Rpo10, found in Sulfurisphaera tokodaii (strain DSM 16993 / JCM 10545 / NBRC 100140 / 7) (Sulfolobus tokodaii).